Reading from the N-terminus, the 275-residue chain is Dermonecrotic toxin SpaSicTox-betaIIA3 (275 aa).

Residue His5 is part of the active site. The Mg(2+) site is built by Glu25 and Asp27. Catalysis depends on His41, which acts as the Nucleophile. Disulfide bonds link Cys45/Cys51 and Cys47/Cys190. Asp85 contributes to the Mg(2+) binding site.

The protein belongs to the arthropod phospholipase D family. Class II subfamily. Mg(2+) serves as cofactor. Expressed by the venom gland.

The protein localises to the secreted. The catalysed reaction is an N-(acyl)-sphingosylphosphocholine = an N-(acyl)-sphingosyl-1,3-cyclic phosphate + choline. The enzyme catalyses an N-(acyl)-sphingosylphosphoethanolamine = an N-(acyl)-sphingosyl-1,3-cyclic phosphate + ethanolamine. It catalyses the reaction a 1-acyl-sn-glycero-3-phosphocholine = a 1-acyl-sn-glycero-2,3-cyclic phosphate + choline. It carries out the reaction a 1-acyl-sn-glycero-3-phosphoethanolamine = a 1-acyl-sn-glycero-2,3-cyclic phosphate + ethanolamine. Functionally, dermonecrotic toxins cleave the phosphodiester linkage between the phosphate and headgroup of certain phospholipids (sphingolipid and lysolipid substrates), forming an alcohol (often choline) and a cyclic phosphate. This toxin acts on sphingomyelin (SM). It may also act on ceramide phosphoethanolamine (CPE), lysophosphatidylcholine (LPC) and lysophosphatidylethanolamine (LPE), but not on lysophosphatidylserine (LPS), and lysophosphatidylglycerol (LPG). It acts by transphosphatidylation, releasing exclusively cyclic phosphate products as second products. Induces dermonecrosis, hemolysis, increased vascular permeability, edema, inflammatory response, and platelet aggregation. The polypeptide is Dermonecrotic toxin SpaSicTox-betaIIA3 (Sicarius patagonicus (Six-eyed sand spider)).